We begin with the raw amino-acid sequence, 156 residues long: Small ribosomal subunit protein uS7 (156 aa).

The protein belongs to the universal ribosomal protein uS7 family. In terms of assembly, part of the 30S ribosomal subunit. Contacts proteins S9 and S11.

In terms of biological role, one of the primary rRNA binding proteins, it binds directly to 16S rRNA where it nucleates assembly of the head domain of the 30S subunit. Is located at the subunit interface close to the decoding center, probably blocks exit of the E-site tRNA. This is Small ribosomal subunit protein uS7 from Gloeothece citriformis (strain PCC 7424) (Cyanothece sp. (strain PCC 7424)).